We begin with the raw amino-acid sequence, 148 residues long: Small ribosomal subunit protein eS12B (148 aa).

It belongs to the eukaryotic ribosomal protein eS12 family. In terms of assembly, component of the small ribosomal subunit (SSU). Mature yeast ribosomes consist of a small (40S) and a large (60S) subunit. The 40S small subunit contains 1 molecule of ribosomal RNA (18S rRNA) and at least 33 different proteins. The large 60S subunit contains 3 rRNA molecules (25S, 5.8S and 5S rRNA) and at least 46 different proteins.

The protein localises to the cytoplasm. Functionally, component of the ribosome, a large ribonucleoprotein complex responsible for the synthesis of proteins in the cell. The small ribosomal subunit (SSU) binds messenger RNAs (mRNAs) and translates the encoded message by selecting cognate aminoacyl-transfer RNA (tRNA) molecules. The large subunit (LSU) contains the ribosomal catalytic site termed the peptidyl transferase center (PTC), which catalyzes the formation of peptide bonds, thereby polymerizing the amino acids delivered by tRNAs into a polypeptide chain. The nascent polypeptides leave the ribosome through a tunnel in the LSU and interact with protein factors that function in enzymatic processing, targeting, and the membrane insertion of nascent chains at the exit of the ribosomal tunnel. The polypeptide is Small ribosomal subunit protein eS12B (rps1202) (Schizosaccharomyces pombe (strain 972 / ATCC 24843) (Fission yeast)).